A 321-amino-acid polypeptide reads, in one-letter code: Fibronectin type III domain-containing protein 8 (321 aa).

The Fibronectin type-III domain occupies 175–277 (VPEVPFICEH…KPYKFATVST (103 aa)).

The sequence is that of Fibronectin type III domain-containing protein 8 (Fndc8) from Mus musculus (Mouse).